The chain runs to 155 residues: MSRENATEEKTTKPDPIYRNRLISMLVNRILRNGKKSLAHRILYGAMSSTRRDTGKNPLLILRQAMIKVTPDVVVKAKRIGGSTYQVPLEVGSMQGKALAIRWLLTASRKRSGRNMASKLGYELIDAAKDNGTAVRRKEETHKMAEANRAFAHFR.

It belongs to the universal ribosomal protein uS7 family. As to quaternary structure, part of the 30S ribosomal subunit.

Its subcellular location is the plastid. In terms of biological role, one of the primary rRNA binding proteins, it binds directly to 16S rRNA where it nucleates assembly of the head domain of the 30S subunit. This chain is Small ribosomal subunit protein uS7c (rps7), found in Aneura mirabilis (Parasitic liverwort).